A 408-amino-acid polypeptide reads, in one-letter code: Glutaryl-CoA dehydrogenase, mitochondrial (408 aa).

The transit peptide at 1-13 (KGGKTQGRSAKSS) directs the protein to the mitochondrion. Residues 107–108 (RS) and Ser-156 each bind substrate. FAD-binding positions include 147 to 156 (FGLTEPNHGS), Ser-156, and 182 to 184 (WIT). Lys-210 carries the N6-acetyllysine modification. Residue 257-264 (FGCLNNAR) participates in substrate binding. FAD is bound by residues Arg-289, Gln-300, and 357–361 (DMLGG). The Proton acceptor role is filled by Glu-384. Residue Gly-385 coordinates substrate. FAD-binding positions include Thr-386, 386–388 (THD), and Phe-404.

It belongs to the acyl-CoA dehydrogenase family. As to quaternary structure, homotetramer. Requires FAD as cofactor.

Its subcellular location is the mitochondrion matrix. The enzyme catalyses glutaryl-CoA + oxidized [electron-transfer flavoprotein] + 2 H(+) = (2E)-butenoyl-CoA + reduced [electron-transfer flavoprotein] + CO2. Its pathway is amino-acid metabolism; lysine degradation. The protein operates within amino-acid metabolism; tryptophan metabolism. Functionally, catalyzes the oxidative decarboxylation of glutaryl-CoA to crotonyl-CoA and CO(2) in the degradative pathway of L-lysine, L-hydroxylysine, and L-tryptophan metabolism. It uses electron transfer flavoprotein as its electron acceptor. The chain is Glutaryl-CoA dehydrogenase, mitochondrial (GCDH) from Sus scrofa (Pig).